A 271-amino-acid chain; its full sequence is Phthiotriol/phenolphthiotriol dimycocerosates methyltransferase 1 (271 aa).

This sequence belongs to the methyltransferase superfamily. Phthiotriol/phenolphthiotriol dimycocerosates methyltransferase family.

Catalyzes the methylation of the lipid moiety of the intermediate compounds phthiotriol and glycosylated phenolphthiotriol dimycoserosates to form phthiocerol dimycocerosates (DIM A) and glycosylated phenolphthiocerol dimycocerosates (PGL). The protein is Phthiotriol/phenolphthiotriol dimycocerosates methyltransferase 1 of Mycobacterium ulcerans (strain Agy99).